The sequence spans 207 residues: NADH-quinone oxidoreductase subunit A (207 aa).

3 helical membrane-spanning segments follow: residues 6–26 (LSAIAFILAAIGLVVFMLVVP), 62–82 (LVAIFFVIFDLEALYLYAYAV), and 87–107 (AGWLGFAAAAIFITILIIGLV).

It belongs to the complex I subunit 3 family. As to quaternary structure, NDH-1 is composed of 14 different subunits. Subunits NuoA, H, J, K, L, M, N constitute the membrane sector of the complex.

The protein resides in the cell inner membrane. It catalyses the reaction a quinone + NADH + 5 H(+)(in) = a quinol + NAD(+) + 4 H(+)(out). In terms of biological role, NDH-1 shuttles electrons from NADH, via FMN and iron-sulfur (Fe-S) centers, to quinones in the respiratory chain. The immediate electron acceptor for the enzyme in this species is believed to be ubiquinone. Couples the redox reaction to proton translocation (for every two electrons transferred, four hydrogen ions are translocated across the cytoplasmic membrane), and thus conserves the redox energy in a proton gradient. The protein is NADH-quinone oxidoreductase subunit A of Psychrobacter cryohalolentis (strain ATCC BAA-1226 / DSM 17306 / VKM B-2378 / K5).